The following is a 417-amino-acid chain: MEFVKCLGHPEEFYNLVRFRIGGKRKVMPKMDQDSLSSSLKTCYKYLNQTSRSFAAVIQALDGEMRNAVCIFYLVLRALDTLEDDMTISVEKKVPLLHNFHSFLYQPDWRFMESKEKDRQVLEDFPTISLEFRNLAEKYQTVIADICRRMGIGMAEFLDKHVTSEQEWDKYCHYVAGLVGIGLSRLFSASEFEDPLVGEDTERANSMGLFLQKTNIIRDYLEDQQGGREFWPQEVWSRYVKKLGDFAKPENIDLAVQCLNELITNALHHIPDVITYLSRLRNQSVFNFCAIPQVMAIATLAACYNNQQVFKGAVKIRKGQAVTLMMDATNMPAVKAIIYQYMEEIYHRIPDSDPSSSKTRQIISTIRTQNLPNCQLISRSHYSPIYLSFVMLLAALSWQYLTTLSQVTEDYVQTGEH.

NADP(+) is bound by residues R52 and R77. D80, E83, and D84 together coordinate Mg(2+). R218 is an NADP(+) binding site. The helical transmembrane segment at 284-304 (SVFNFCAIPQVMAIATLAACY) threads the bilayer. Positions 315 and 317 each coordinate NADP(+). A helical membrane pass occupies residues 384 to 404 (PIYLSFVMLLAALSWQYLTTL).

Belongs to the phytoene/squalene synthase family. It depends on Mg(2+) as a cofactor. As to expression, widely expressed.

The protein localises to the endoplasmic reticulum membrane. The enzyme catalyses 2 (2E,6E)-farnesyl diphosphate + NADPH + H(+) = squalene + 2 diphosphate + NADP(+). It catalyses the reaction 2 (2E,6E)-farnesyl diphosphate + NADH + H(+) = squalene + 2 diphosphate + NAD(+). The catalysed reaction is 2 (2E,6E)-farnesyl diphosphate = presqualene diphosphate + diphosphate. It carries out the reaction presqualene diphosphate + NADH + H(+) = squalene + diphosphate + NAD(+). The enzyme catalyses presqualene diphosphate + NADPH + H(+) = squalene + diphosphate + NADP(+). Its pathway is terpene metabolism; lanosterol biosynthesis; lanosterol from farnesyl diphosphate: step 1/3. In terms of biological role, catalyzes the condensation of 2 farnesyl pyrophosphate (FPP) moieties to form squalene. Proceeds in two distinct steps. In the first half-reaction, two molecules of FPP react to form the stable presqualene diphosphate intermediate (PSQPP), with concomitant release of a proton and a molecule of inorganic diphosphate. In the second half-reaction, PSQPP undergoes heterolysis, isomerization, and reduction with NADPH or NADH to form squalene. It is the first committed enzyme of the sterol biosynthesis pathway. The protein is Squalene synthase (FDFT1) of Homo sapiens (Human).